We begin with the raw amino-acid sequence, 900 residues long: Trehalose-phosphatase (900 aa).

Disordered regions lie at residues 76–109 and 874–900; these read SRLF…EEDP and VKHS…SYKN. The span at 82–108 shows a compositional bias: basic and acidic residues; it reads KNRDKSENGEKGENDLHAKEEREKEED.

In the C-terminal section; belongs to the trehalose phosphatase family. The protein in the N-terminal section; belongs to the glycosyltransferase 20 family. Mg(2+) serves as cofactor.

It carries out the reaction alpha,alpha-trehalose 6-phosphate + H2O = alpha,alpha-trehalose + phosphate. It participates in carbohydrate biosynthesis. Functionally, phosphatase catalytic subunit of the trehalose synthase complex that catalyzes the production of trehalose from glucose-6-phosphate and UDP-alpha-D-glucose in a two step process. The chain is Trehalose-phosphatase from Zygosaccharomyces rouxii.